The primary structure comprises 196 residues: Peroxiredoxin TSA1 (196 aa).

Positions 3–161 constitute a Thioredoxin domain; the sequence is AQVQKQAPTF…ALRLVEAFQW (159 aa). Lysine 14 is covalently cross-linked (Glycyl lysine isopeptide (Lys-Gly) (interchain with G-Cter in ubiquitin)). 45–47 serves as a coordination point for substrate; it reads TFV. Cysteine 48 functions as the Cysteine sulfenic acid (-SOH) intermediate in the catalytic mechanism. A Glycyl lysine isopeptide (Lys-Gly) (interchain with G-Cter in ubiquitin) cross-link involves residue lysine 89. A substrate-binding site is contributed by arginine 124. Lysine 132 participates in a covalent cross-link: Glycyl lysine isopeptide (Lys-Gly) (interchain with G-Cter in ubiquitin). Phosphothreonine is present on threonine 174.

This sequence belongs to the peroxiredoxin family. AhpC/Prx1 subfamily. In terms of assembly, homodimer; disulfide-linked, upon oxidation. Interacts with YAP1 via transient disulfide linkages. Post-translationally, the enzyme can be inactivated by further oxidation of the cysteine sulfenic acid (C(P)-SOH) to sulphinic acid (C(P)-SO2H) instead of its condensation to a disulfide bond. It can be reactivated by forming a transient disulfide bond with sulfiredoxin SRX1, which reduces the cysteine sulfinic acid in an ATP- and Mg-dependent manner.

The protein resides in the cytoplasm. The enzyme catalyses a hydroperoxide + [thioredoxin]-dithiol = an alcohol + [thioredoxin]-disulfide + H2O. Functionally, thiol-specific peroxidase that catalyzes the reduction of hydrogen peroxide and organic hydroperoxides to water and alcohols, respectively. Plays a role in cell protection against oxidative stress by detoxifying peroxides and as sensor of hydrogen peroxide-mediated signaling events. Protects the cell against the oxidative stress caused by nascent-protein misfolding and aggregation. Relays hydrogen peroxide as a signal to the transcription factor YAP1 by inducing the formation of intramolecular disulfide bonds in YAP1, which causes its nuclear accumulation and activation. Can act alternatively as peroxidase and molecular chaperone. Oxidative stress and heat shock exposure cause a reversible shift of the protein structure from low MW species to high MW complexes, triggering a peroxidase-to-chaperone functional switch. The chaperone function of the protein enhances resistance to heat shock. This Saccharomyces cerevisiae (strain ATCC 204508 / S288c) (Baker's yeast) protein is Peroxiredoxin TSA1.